The primary structure comprises 123 residues: Small ribosomal subunit protein uS12 (123 aa).

Position 89 is a 3-methylthioaspartic acid (Asp89).

The protein belongs to the universal ribosomal protein uS12 family. As to quaternary structure, part of the 30S ribosomal subunit. Contacts proteins S8 and S17. May interact with IF1 in the 30S initiation complex.

Functionally, with S4 and S5 plays an important role in translational accuracy. Interacts with and stabilizes bases of the 16S rRNA that are involved in tRNA selection in the A site and with the mRNA backbone. Located at the interface of the 30S and 50S subunits, it traverses the body of the 30S subunit contacting proteins on the other side and probably holding the rRNA structure together. The combined cluster of proteins S8, S12 and S17 appears to hold together the shoulder and platform of the 30S subunit. The protein is Small ribosomal subunit protein uS12 of Anaeromyxobacter sp. (strain Fw109-5).